Here is an 84-residue protein sequence, read N- to C-terminus: Cytochrome b559 subunit alpha (84 aa).

A helical membrane pass occupies residues 24–38 (IIHAVTLPAIFIAGF). His26 is a heme binding site.

The protein belongs to the PsbE/PsbF family. As to quaternary structure, heterodimer of an alpha subunit and a beta subunit. PSII is composed of 1 copy each of membrane proteins PsbA, PsbB, PsbC, PsbD, PsbE, PsbF, PsbH, PsbI, PsbJ, PsbK, PsbL, PsbM, PsbT, PsbX, PsbY, Psb30/Ycf12, peripheral proteins PsbO, CyanoQ (PsbQ), PsbU, PsbV and a large number of cofactors. It forms dimeric complexes. The cofactor is heme b.

It localises to the cellular thylakoid membrane. Its function is as follows. This b-type cytochrome is tightly associated with the reaction center of photosystem II (PSII). PSII is a light-driven water:plastoquinone oxidoreductase that uses light energy to abstract electrons from H(2)O, generating O(2) and a proton gradient subsequently used for ATP formation. It consists of a core antenna complex that captures photons, and an electron transfer chain that converts photonic excitation into a charge separation. This is Cytochrome b559 subunit alpha from Prochlorococcus marinus (strain MIT 9301).